The primary structure comprises 240 residues: Uridylate kinase (240 aa).

12 to 15 (KISG) is a binding site for ATP. The tract at residues 20–25 (GNQGFG) is involved in allosteric activation by GTP. G54 lines the UMP pocket. 2 residues coordinate ATP: G55 and R59. Residues D74 and 135–142 (TGNPYFST) contribute to the UMP site. Y168 and D171 together coordinate ATP.

This sequence belongs to the UMP kinase family. In terms of assembly, homohexamer.

Its subcellular location is the cytoplasm. It catalyses the reaction UMP + ATP = UDP + ADP. The protein operates within pyrimidine metabolism; CTP biosynthesis via de novo pathway; UDP from UMP (UMPK route): step 1/1. With respect to regulation, allosterically activated by GTP. Inhibited by UTP. Catalyzes the reversible phosphorylation of UMP to UDP. In Moorella thermoacetica (strain ATCC 39073 / JCM 9320), this protein is Uridylate kinase.